We begin with the raw amino-acid sequence, 481 residues long: Glutamyl-tRNA(Gln) amidotransferase subunit A (481 aa).

Residues Lys-74 and Ser-149 each act as charge relay system in the active site. The active-site Acyl-ester intermediate is Ser-173.

Belongs to the amidase family. GatA subfamily. As to quaternary structure, heterotrimer of A, B and C subunits.

The enzyme catalyses L-glutamyl-tRNA(Gln) + L-glutamine + ATP + H2O = L-glutaminyl-tRNA(Gln) + L-glutamate + ADP + phosphate + H(+). Functionally, allows the formation of correctly charged Gln-tRNA(Gln) through the transamidation of misacylated Glu-tRNA(Gln) in organisms which lack glutaminyl-tRNA synthetase. The reaction takes place in the presence of glutamine and ATP through an activated gamma-phospho-Glu-tRNA(Gln). This is Glutamyl-tRNA(Gln) amidotransferase subunit A from Francisella tularensis subsp. tularensis (strain FSC 198).